We begin with the raw amino-acid sequence, 514 residues long: Ferrochelatase-2, chloroplastic (514 aa).

It belongs to the ferrochelatase family.

It localises to the plastid. The protein resides in the chloroplast. It carries out the reaction heme b + 2 H(+) = protoporphyrin IX + Fe(2+). The protein operates within porphyrin-containing compound metabolism; protoheme biosynthesis; protoheme from protoporphyrin-IX: step 1/1. In terms of biological role, catalyzes the ferrous insertion into protoporphyrin IX. The protein is Ferrochelatase-2, chloroplastic (HEMH) of Cucumis sativus (Cucumber).